Here is an 879-residue protein sequence, read N- to C-terminus: Alanine--tRNA ligase (879 aa).

Zn(2+)-binding residues include His564, His568, Cys666, and His670.

Belongs to the class-II aminoacyl-tRNA synthetase family. Zn(2+) serves as cofactor.

Its subcellular location is the cytoplasm. It catalyses the reaction tRNA(Ala) + L-alanine + ATP = L-alanyl-tRNA(Ala) + AMP + diphosphate. Its function is as follows. Catalyzes the attachment of alanine to tRNA(Ala) in a two-step reaction: alanine is first activated by ATP to form Ala-AMP and then transferred to the acceptor end of tRNA(Ala). Also edits incorrectly charged Ser-tRNA(Ala) and Gly-tRNA(Ala) via its editing domain. The sequence is that of Alanine--tRNA ligase from Crocosphaera subtropica (strain ATCC 51142 / BH68) (Cyanothece sp. (strain ATCC 51142)).